We begin with the raw amino-acid sequence, 176 residues long: Flavodoxin 1 (176 aa).

The Flavodoxin-like domain maps to 4–165 (TGIFFGSDTG…RVEKWVKQIS (162 aa)).

The protein belongs to the flavodoxin family. Requires FMN as cofactor.

Low-potential electron donor to a number of redox enzymes (Potential). Involved in the reactivation of inactive cob(II)alamin in methionine synthase. The chain is Flavodoxin 1 (fldA) from Escherichia coli O157:H7.